Consider the following 286-residue polypeptide: ATP synthase gamma chain (286 aa).

This sequence belongs to the ATPase gamma chain family. F-type ATPases have 2 components, CF(1) - the catalytic core - and CF(0) - the membrane proton channel. CF(1) has five subunits: alpha(3), beta(3), gamma(1), delta(1), epsilon(1). CF(0) has three main subunits: a, b and c.

Its subcellular location is the cell inner membrane. In terms of biological role, produces ATP from ADP in the presence of a proton gradient across the membrane. The gamma chain is believed to be important in regulating ATPase activity and the flow of protons through the CF(0) complex. This is ATP synthase gamma chain from Pseudomonas aeruginosa (strain UCBPP-PA14).